The primary structure comprises 346 residues: GTPase Obg (346 aa).

The Obg domain occupies 1–158 (MFVDECVVKL…GTYRLVLKSI (158 aa)). The OBG-type G domain occupies 159–332 (ADVGLVGFPN…LKKELLKRVT (174 aa)). GTP contacts are provided by residues 165–172 (GFPNAGKS), 190–194 (FTTLH), 216–219 (DVPG), 286–289 (NKMD), and 313–315 (SCL). Positions 172 and 192 each coordinate Mg(2+).

It belongs to the TRAFAC class OBG-HflX-like GTPase superfamily. OBG GTPase family. Monomer. Mg(2+) serves as cofactor.

It is found in the cytoplasm. Functionally, an essential GTPase which binds GTP, GDP and possibly (p)ppGpp with moderate affinity, with high nucleotide exchange rates and a fairly low GTP hydrolysis rate. Plays a role in control of the cell cycle, stress response, ribosome biogenesis and in those bacteria that undergo differentiation, in morphogenesis control. This chain is GTPase Obg, found in Opitutus terrae (strain DSM 11246 / JCM 15787 / PB90-1).